Here is a 305-residue protein sequence, read N- to C-terminus: Acetaldehyde dehydrogenase (305 aa).

12–15 serves as a coordination point for NAD(+); sequence SGNI. Cysteine 127 serves as the catalytic Acyl-thioester intermediate. Residues 158–166 and asparagine 277 contribute to the NAD(+) site; that span reads SAGPGTRAN.

The protein belongs to the acetaldehyde dehydrogenase family.

It catalyses the reaction acetaldehyde + NAD(+) + CoA = acetyl-CoA + NADH + H(+). This chain is Acetaldehyde dehydrogenase, found in Mycolicibacterium paratuberculosis (strain ATCC BAA-968 / K-10) (Mycobacterium paratuberculosis).